The primary structure comprises 344 residues: Phenylalanine--tRNA ligase alpha subunit (344 aa).

Position 269 (E269) interacts with Mg(2+).

It belongs to the class-II aminoacyl-tRNA synthetase family. Phe-tRNA synthetase alpha subunit type 1 subfamily. In terms of assembly, tetramer of two alpha and two beta subunits. Mg(2+) serves as cofactor.

It localises to the cytoplasm. The catalysed reaction is tRNA(Phe) + L-phenylalanine + ATP = L-phenylalanyl-tRNA(Phe) + AMP + diphosphate + H(+). The protein is Phenylalanine--tRNA ligase alpha subunit of Ralstonia nicotianae (strain ATCC BAA-1114 / GMI1000) (Ralstonia solanacearum).